The primary structure comprises 891 residues: MSGKVANATPKAAAGKPRLSAAGGGAYRRTSSGPLPSAGGGGGRASSESGVSSRVRVAVRLRPRNADELAADADFGDCVELQPELKRLKLRKNNWESETYEFDEVLTEFASQKRVYEVVAKPVVESVLEGYNGTVMAYGQTGTGKTFTLGRLGEEDTAARGIMVRAMEDILADITPETDTVSVSYLQLYMEMIQDLLDPVNDNIAIVEDPRTGDVSLPGATVVEVRDQKSFVDLLRIGEAHRVAANTKLNTESSRSHALLMVNVRRAVKGKHEMDVSISGENGHSSSMVGSLRPPIVRKSKLVVVDLAGSERIDKSGSEGHTLEEAKSINLSLSALGKCINALAENSPHVPVRDSKLTRLLKDSFGGTARTSLVVTIGPSPRHRGETTSTIMFGQRAMKVENMVKLKEEFDYKSLCRRLDIELDKLIAENERQRKYFDDEIERITAEAQLRVTEAEREYKISLENEKAKYHQEYLDSIKILEEKWKIHQQSPKKLIKETEPTSSEVGEVQNLLQNEKVLRQSAEDEANDLKNQVLHWKKMEAAATAEVVKLRKMLDTEASQKEKLDEEIAVLKSQLLQLSLDADETRRSLDRGDGSGKIFPGFDSLMSHSRNSQPREQSNGPKPPIAKLFEQVGLQKILSLLESEEPDVRVHAVKVVANLAAEEANQEKIVEAGGLTSLLMLLRSSEDETIRRVAAGAIANLAMNETNQDLIMAQGGVSLLSMTASDAEDPQTLRMVAGAIANLCGNDKLQTRLRGEGGIKALLGMVKCGHPDVLAQVARGIANFAKCESRAATQGNKVGKSLLIDDGALPWIVKNANNEAAPIRRHIELALCHLAQHEVNSKDIISEGALWELVRISRDCSREDIRMLAYRTLTSSPTLQSEMRRLRIEC.

The disordered stretch occupies residues 1–54 (MSGKVANATPKAAAGKPRLSAAGGGAYRRTSSGPLPSAGGGGGRASSESGVSSR). Low complexity predominate over residues 45 to 54 (ASSESGVSSR). Residues 54–400 (RVRVAVRLRP…IMFGQRAMKV (347 aa)) enclose the Kinesin motor domain. Residue 139–146 (GQTGTGKT) coordinates ATP. The D-BOX motif lies at 370-378 (RTSLVVTIG). Positions 502-592 (TSSEVGEVQN…ADETRRSLDR (91 aa)) form a coiled coil. Residues 586–595 (TRRSLDRGDG) are compositionally biased toward basic and acidic residues. The disordered stretch occupies residues 586–626 (TRRSLDRGDGSGKIFPGFDSLMSHSRNSQPREQSNGPKPPI). Residues 607-621 (MSHSRNSQPREQSNG) show a composition bias toward polar residues. 4 ARM repeats span residues 623–662 (KPPI…NLAA), 664–704 (EANQ…NLAM), 706–746 (ETNQ…NLCG), and 748–787 (DKLQ…NFAK).

The protein belongs to the TRAFAC class myosin-kinesin ATPase superfamily. Kinesin family. Ungrouped subfamily.

The protein localises to the cytoplasm. Its subcellular location is the cytoskeleton. This Oryza sativa subsp. japonica (Rice) protein is Kinesin-like protein KIN-UB.